Here is a 512-residue protein sequence, read N- to C-terminus: tRNA-2-methylthio-N(6)-dimethylallyladenosine synthase (512 aa).

The region spanning 17–133 is the MTTase N-terminal domain; it reads RTYEVRTFGC…LPTLLERSAH (117 aa). 6 residues coordinate [4Fe-4S] cluster: C26, C62, C96, C170, C174, and C177. The 237-residue stretch at 156-392 folds into the Radical SAM core domain; the sequence is RESAYAGWVS…LALQERISEE (237 aa). The region spanning 395–461 is the TRAM domain; sequence RKLIGTTQEL…PHFLIADGGV (67 aa). The interval 473-512 is disordered; that stretch reads TELGETPTTAPVGVGLGMPSIKKPEPTTAGGCSTGGCGCE.

This sequence belongs to the methylthiotransferase family. MiaB subfamily. In terms of assembly, monomer. Requires [4Fe-4S] cluster as cofactor.

The protein localises to the cytoplasm. It carries out the reaction N(6)-dimethylallyladenosine(37) in tRNA + (sulfur carrier)-SH + AH2 + 2 S-adenosyl-L-methionine = 2-methylsulfanyl-N(6)-dimethylallyladenosine(37) in tRNA + (sulfur carrier)-H + 5'-deoxyadenosine + L-methionine + A + S-adenosyl-L-homocysteine + 2 H(+). Functionally, catalyzes the methylthiolation of N6-(dimethylallyl)adenosine (i(6)A), leading to the formation of 2-methylthio-N6-(dimethylallyl)adenosine (ms(2)i(6)A) at position 37 in tRNAs that read codons beginning with uridine. The polypeptide is tRNA-2-methylthio-N(6)-dimethylallyladenosine synthase (Corynebacterium jeikeium (strain K411)).